A 475-amino-acid polypeptide reads, in one-letter code: Ribulose bisphosphate carboxylase large chain (475 aa).

Residues 1–2 constitute a propeptide that is removed on maturation; it reads MS. N-acetylproline is present on P3. N6,N6,N6-trimethyllysine is present on K14. Residues N123 and T173 each coordinate substrate. K175 acts as the Proton acceptor in catalysis. Position 177 (K177) interacts with substrate. Mg(2+) contacts are provided by K201, D203, and E204. K201 is subject to N6-carboxylysine. The Proton acceptor role is filled by H294. Substrate-binding residues include R295, H327, and S379.

Belongs to the RuBisCO large chain family. Type I subfamily. Heterohexadecamer of 8 large chains and 8 small chains; disulfide-linked. The disulfide link is formed within the large subunit homodimers. The cofactor is Mg(2+). The disulfide bond which can form in the large chain dimeric partners within the hexadecamer appears to be associated with oxidative stress and protein turnover.

Its subcellular location is the plastid. It is found in the chloroplast. The enzyme catalyses 2 (2R)-3-phosphoglycerate + 2 H(+) = D-ribulose 1,5-bisphosphate + CO2 + H2O. It catalyses the reaction D-ribulose 1,5-bisphosphate + O2 = 2-phosphoglycolate + (2R)-3-phosphoglycerate + 2 H(+). Its function is as follows. RuBisCO catalyzes two reactions: the carboxylation of D-ribulose 1,5-bisphosphate, the primary event in carbon dioxide fixation, as well as the oxidative fragmentation of the pentose substrate in the photorespiration process. Both reactions occur simultaneously and in competition at the same active site. In Plumbago auriculata (Cape leadwort), this protein is Ribulose bisphosphate carboxylase large chain.